The primary structure comprises 346 residues: Large ribosomal subunit protein uL10 (346 aa).

The tract at residues 305–346 (EVPAAPAPEAKEEKKEEAEEEEEEKKEVSEEDLSAGLGALFG) is disordered. The segment covering 322-337 (AEEEEEEKKEVSEEDL) has biased composition (acidic residues).

This sequence belongs to the universal ribosomal protein uL10 family. As to quaternary structure, part of the 50S ribosomal subunit. Forms part of the ribosomal stalk which helps the ribosome interact with GTP-bound translation factors. Forms a heptameric L10(L12)2(L12)2(L12)2 complex, where L10 forms an elongated spine to which the L12 dimers bind in a sequential fashion.

In terms of biological role, forms part of the ribosomal stalk, playing a central role in the interaction of the ribosome with GTP-bound translation factors. This Ignicoccus hospitalis (strain KIN4/I / DSM 18386 / JCM 14125) protein is Large ribosomal subunit protein uL10.